Here is a 655-residue protein sequence, read N- to C-terminus: Sphingomyelin phosphodiesterase 3 (655 aa).

Topologically, residues 1–10 (MVLYTTPFPN) are cytoplasmic. The helical intramembrane region spans 11-31 (SCLSALHAVSWALIFPCYWLV). The Cytoplasmic segment spans residues 32–64 (DRLVASFIPTTYEKRQRADDPCYLQLFCTVLFT). Residues C53 and C59 are each lipidated (S-palmitoyl cysteine). An intramembrane region (helical) is located at residues 65-85 (PVYLALLVAALPFAFLGFIFW). At 86 to 655 (SPLQSARRPY…LMVSAGEEEA (570 aa)) the chain is on the cytoplasmic side. A Phosphoserine modification is found at S178. Disordered stretches follow at residues 209-237 (VEYKGDGGRHPSDEAANGPASGEQADGSL) and 250-320 (GGRA…SNSK). The span at 211-221 (YKGDGGRHPSD) shows a compositional bias: basic and acidic residues. Residue S289 is modified to Phosphoserine. E362 provides a ligand contact to Mg(2+). S-palmitoyl cysteine attachment occurs at residues C395 and C396. H639 (proton acceptor) is an active-site residue.

The protein belongs to the neutral sphingomyelinase family. Mg(2+) is required as a cofactor. In terms of processing, palmitoylated, palmitoylation-deficient proteins are targeted for lysosomal degradation. In brain sections, it is restricted to neurons and especially prominent in large cells, including Purkinje cells, pyramidal cells, neurons of the dentate gyrus granular layer, and neurons in the pontine nuclei. Also present in the hypothalamic nuclei, neurons in the piriform cortex, and nuclei of the brainstem (at protein level). Mainly expressed in brain and jejunum. Weakly or not expressed in heart, spleen, lung, liver, kidney and testis.

The protein localises to the golgi apparatus membrane. It localises to the cell membrane. The catalysed reaction is a sphingomyelin + H2O = phosphocholine + an N-acylsphing-4-enine + H(+). It catalyses the reaction N-(15Z-tetracosenoyl)sphing-4-enine-1-phosphocholine + H2O = N-(15Z-tetracosenoyl)-sphing-4-enine + phosphocholine + H(+). It carries out the reaction N-(tetracosanoyl)-sphing-4-enine-1-phosphocholine + H2O = N-tetracosanoyl-sphing-4-enine + phosphocholine + H(+). The enzyme catalyses an N-(acyl)-sphingosylphosphocholine + H2O = an N-acyl-sphingoid base + phosphocholine + H(+). The catalysed reaction is 1-hexadecanoyl-sn-glycero-3-phosphocholine + H2O = 1-hexadecanoyl-sn-glycerol + phosphocholine + H(+). It catalyses the reaction 1-O-octadecyl-sn-glycero-3-phosphocholine + H2O = 1-O-octadecyl-sn-glycerol + phosphocholine + H(+). It carries out the reaction a sphingosylphosphocholine + H2O = a sphingoid base + phosphocholine + H(+). The enzyme catalyses N-(hexadecanoyl)-sphing-4-enine-1-phosphocholine + H2O = N-hexadecanoylsphing-4-enine + phosphocholine + H(+). It functions in the pathway lipid metabolism; sphingolipid metabolism. Inhibited by nSMase inhibitor GW4869. Binding of anionic phospholipids (APLs) such as phosphatidylserine (PS) and phosphatidic acid (PA) increases enzymatic activity. Functionally, catalyzes the hydrolysis of sphingomyelin to form ceramide and phosphocholine. Ceramide mediates numerous cellular functions, such as apoptosis and growth arrest, and is capable of regulating these 2 cellular events independently. Also hydrolyzes sphingosylphosphocholine. Binds to anionic phospholipids (APLs) such as phosphatidylserine (PS) and phosphatidic acid (PA) that modulate enzymatic activity and subcellular location. Regulates the cell cycle by acting as a growth suppressor in confluent cells. Acts as a regulator of postnatal development and participates in bone and dentin mineralization. May be involved in IL-1-beta-induced JNK activation in hepatocytes. May act as a mediator in transcriptional regulation of NOS2/iNOS via the NF-kappa-B activation under inflammatory conditions. In Rattus norvegicus (Rat), this protein is Sphingomyelin phosphodiesterase 3.